The following is a 678-amino-acid chain: Protein KHNYN (678 aa).

A Phosphoserine modification is found at Ser-10. Disordered stretches follow at residues 222 to 251 (QGVRAPPSDGRESLDTGSMGPGDCRGARGD) and 347 to 407 (LHNG…ARGG). The segment covering 355–367 (PRVPSPPPAPEPP) has biased composition (pro residues). Position 359 is a phosphoserine (Ser-359). Residues 370–388 (CGDRGDCGDRGDVGDRGDK) show a composition bias toward basic and acidic residues. The region spanning 437–589 (LRHIVIDGSN…LGRNGPTLDE (153 aa)) is the RNase NYN domain. A disordered region spans residues 595–633 (ARTQGSSKAQHPSRGFAEHGKQQQGREEEKGSGGIRKTR). A compositionally biased stretch (basic and acidic residues) spans 610–633 (FAEHGKQQQGREEEKGSGGIRKTR).

Belongs to the N4BP1 family.

The sequence is that of Protein KHNYN (KHNYN) from Homo sapiens (Human).